Consider the following 113-residue polypeptide: UPF0102 protein SUN_0231 (113 aa).

Belongs to the UPF0102 family.

The polypeptide is UPF0102 protein SUN_0231 (Sulfurovum sp. (strain NBC37-1)).